We begin with the raw amino-acid sequence, 154 residues long: 6,7-dimethyl-8-ribityllumazine synthase (154 aa).

5-amino-6-(D-ribitylamino)uracil is bound by residues Phe22, 56-58 (SFE), and 80-82 (AVI). 85–86 (ST) contacts (2S)-2-hydroxy-3-oxobutyl phosphate. His88 acts as the Proton donor in catalysis. Tyr113 lines the 5-amino-6-(D-ribitylamino)uracil pocket. Arg127 serves as a coordination point for (2S)-2-hydroxy-3-oxobutyl phosphate.

Belongs to the DMRL synthase family. In terms of assembly, forms an icosahedral capsid composed of 60 subunits, arranged as a dodecamer of pentamers.

The enzyme catalyses (2S)-2-hydroxy-3-oxobutyl phosphate + 5-amino-6-(D-ribitylamino)uracil = 6,7-dimethyl-8-(1-D-ribityl)lumazine + phosphate + 2 H2O + H(+). It participates in cofactor biosynthesis; riboflavin biosynthesis; riboflavin from 2-hydroxy-3-oxobutyl phosphate and 5-amino-6-(D-ribitylamino)uracil: step 1/2. Its function is as follows. Catalyzes the formation of 6,7-dimethyl-8-ribityllumazine by condensation of 5-amino-6-(D-ribitylamino)uracil with 3,4-dihydroxy-2-butanone 4-phosphate. This is the penultimate step in the biosynthesis of riboflavin. The polypeptide is 6,7-dimethyl-8-ribityllumazine synthase (Sulfurihydrogenibium sp. (strain YO3AOP1)).